We begin with the raw amino-acid sequence, 50 residues long: Small ribosomal subunit protein uS14 (50 aa).

Residues Cys-15, Cys-18, Cys-33, and Cys-36 each coordinate Zn(2+).

It belongs to the universal ribosomal protein uS14 family. Zinc-binding uS14 subfamily. As to quaternary structure, part of the 30S ribosomal subunit. Zn(2+) is required as a cofactor.

Its function is as follows. Binds 16S rRNA, required for the assembly of 30S particles. In Methanococcoides burtonii (strain DSM 6242 / NBRC 107633 / OCM 468 / ACE-M), this protein is Small ribosomal subunit protein uS14.